The following is a 196-amino-acid chain: Probable malonic semialdehyde reductase RutE (196 aa).

Belongs to the nitroreductase family. HadB/RutE subfamily. It depends on FMN as a cofactor.

It carries out the reaction 3-hydroxypropanoate + NADP(+) = 3-oxopropanoate + NADPH + H(+). May reduce toxic product malonic semialdehyde to 3-hydroxypropionic acid, which is excreted. The polypeptide is Probable malonic semialdehyde reductase RutE (Shigella sonnei (strain Ss046)).